The following is a 168-amino-acid chain: MRVGVYPGTFDPITLGHMDIIRRGAKLVDRLVIGVTTNITKSPLFDDDERIAMVKREVAAIEGDIQVVGFNSLLMDFAQREGATVIVRGLRAVADFEYEYQMAGMNQQLNDRIETVFLMADVGLQPIASRLVKEIAIFGGEIHKFVTPAVCKAVIARIAERGLRQGER.

Position 9 (Thr9) interacts with substrate. ATP is bound by residues 9–10 (TF) and His17. The substrate site is built by Lys41, Leu74, and Arg88. Residues 89–91 (GLR), Glu99, and 124–130 (LQPIASR) contribute to the ATP site.

This sequence belongs to the bacterial CoaD family. As to quaternary structure, homohexamer. Mg(2+) is required as a cofactor.

Its subcellular location is the cytoplasm. It carries out the reaction (R)-4'-phosphopantetheine + ATP + H(+) = 3'-dephospho-CoA + diphosphate. Its pathway is cofactor biosynthesis; coenzyme A biosynthesis; CoA from (R)-pantothenate: step 4/5. In terms of biological role, reversibly transfers an adenylyl group from ATP to 4'-phosphopantetheine, yielding dephospho-CoA (dPCoA) and pyrophosphate. In Sphingopyxis alaskensis (strain DSM 13593 / LMG 18877 / RB2256) (Sphingomonas alaskensis), this protein is Phosphopantetheine adenylyltransferase.